The chain runs to 157 residues: Crossover junction endodeoxyribonuclease RuvC (157 aa).

Active-site residues include D7, E66, and D139. The Mg(2+) site is built by D7, E66, and D139.

It belongs to the RuvC family. In terms of assembly, homodimer which binds Holliday junction (HJ) DNA. The HJ becomes 2-fold symmetrical on binding to RuvC with unstacked arms; it has a different conformation from HJ DNA in complex with RuvA. In the full resolvosome a probable DNA-RuvA(4)-RuvB(12)-RuvC(2) complex forms which resolves the HJ. Requires Mg(2+) as cofactor.

The protein localises to the cytoplasm. The catalysed reaction is Endonucleolytic cleavage at a junction such as a reciprocal single-stranded crossover between two homologous DNA duplexes (Holliday junction).. The RuvA-RuvB-RuvC complex processes Holliday junction (HJ) DNA during genetic recombination and DNA repair. Endonuclease that resolves HJ intermediates. Cleaves cruciform DNA by making single-stranded nicks across the HJ at symmetrical positions within the homologous arms, yielding a 5'-phosphate and a 3'-hydroxyl group; requires a central core of homology in the junction. The consensus cleavage sequence is 5'-(A/T)TT(C/G)-3'. Cleavage occurs on the 3'-side of the TT dinucleotide at the point of strand exchange. HJ branch migration catalyzed by RuvA-RuvB allows RuvC to scan DNA until it finds its consensus sequence, where it cleaves and resolves the cruciform DNA. The polypeptide is Crossover junction endodeoxyribonuclease RuvC (Helicobacter pylori (strain J99 / ATCC 700824) (Campylobacter pylori J99)).